The sequence spans 198 residues: UPF0301 protein Tfu_2389 (198 aa).

The protein belongs to the UPF0301 (AlgH) family.

The protein is UPF0301 protein Tfu_2389 of Thermobifida fusca (strain YX).